A 211-amino-acid polypeptide reads, in one-letter code: ATP phosphoribosyltransferase (211 aa).

The protein belongs to the ATP phosphoribosyltransferase family. Short subfamily. As to quaternary structure, heteromultimer composed of HisG and HisZ subunits.

Its subcellular location is the cytoplasm. The catalysed reaction is 1-(5-phospho-beta-D-ribosyl)-ATP + diphosphate = 5-phospho-alpha-D-ribose 1-diphosphate + ATP. It participates in amino-acid biosynthesis; L-histidine biosynthesis; L-histidine from 5-phospho-alpha-D-ribose 1-diphosphate: step 1/9. In terms of biological role, catalyzes the condensation of ATP and 5-phosphoribose 1-diphosphate to form N'-(5'-phosphoribosyl)-ATP (PR-ATP). Has a crucial role in the pathway because the rate of histidine biosynthesis seems to be controlled primarily by regulation of HisG enzymatic activity. In Lacticaseibacillus paracasei (strain ATCC 334 / BCRC 17002 / CCUG 31169 / CIP 107868 / KCTC 3260 / NRRL B-441) (Lactobacillus paracasei), this protein is ATP phosphoribosyltransferase.